A 105-amino-acid chain; its full sequence is Small ribosomal subunit protein eS26 (105 aa).

Belongs to the eukaryotic ribosomal protein eS26 family. As to quaternary structure, component of the small ribosomal subunit.

It is found in the cytoplasm. The protein is Small ribosomal subunit protein eS26 (RPS26) of Encephalitozoon cuniculi (strain GB-M1) (Microsporidian parasite).